The following is an 800-amino-acid chain: Phenylalanine--tRNA ligase beta subunit (800 aa).

A tRNA-binding domain is found at 39-152; sequence AAGLSKIVVG…EDAVPGEEVF (114 aa). The 76-residue stretch at 405–480 folds into the B5 domain; that stretch reads TSDVEVSSTL…RIYGYDRLPT (76 aa). The Mg(2+) site is built by D458, D464, E467, and E468. Residues 707 to 800 enclose the FDX-ACB domain; sequence TKFPAVSRDV…LEEKVNAEVR (94 aa).

Belongs to the phenylalanyl-tRNA synthetase beta subunit family. Type 1 subfamily. Tetramer of two alpha and two beta subunits. Mg(2+) serves as cofactor.

Its subcellular location is the cytoplasm. It carries out the reaction tRNA(Phe) + L-phenylalanine + ATP = L-phenylalanyl-tRNA(Phe) + AMP + diphosphate + H(+). The polypeptide is Phenylalanine--tRNA ligase beta subunit (Streptococcus pneumoniae (strain ATCC BAA-255 / R6)).